Consider the following 468-residue polypeptide: 3-isopropylmalate dehydratase large subunit (468 aa).

Cys-349, Cys-409, and Cys-412 together coordinate [4Fe-4S] cluster.

The protein belongs to the aconitase/IPM isomerase family. LeuC type 1 subfamily. As to quaternary structure, heterodimer of LeuC and LeuD. The cofactor is [4Fe-4S] cluster.

It catalyses the reaction (2R,3S)-3-isopropylmalate = (2S)-2-isopropylmalate. It participates in amino-acid biosynthesis; L-leucine biosynthesis; L-leucine from 3-methyl-2-oxobutanoate: step 2/4. Catalyzes the isomerization between 2-isopropylmalate and 3-isopropylmalate, via the formation of 2-isopropylmaleate. The sequence is that of 3-isopropylmalate dehydratase large subunit from Shewanella baltica (strain OS223).